A 629-amino-acid polypeptide reads, in one-letter code: Forkhead box protein O1-B (629 aa).

Disordered regions lie at residues 1–54 (MAEP…PEQG), 88–134 (CAHP…SRRN), 211–308 (SWWM…SPFL), and 359–397 (KNNTQGSQEAQTALSSPLMQGSPGYPSYTSPNMGPQPQV). Residues 36–46 (QPGNSNTSSPA) are compositionally biased toward polar residues. 2 stretches are compositionally biased toward low complexity: residues 90–107 (HPQQQHPQQPNPQLTHPQ) and 115–133 (PASGSSPAAAQRKSSSSRR). The fork-head DNA-binding region spans 136-230 (WGNMSYADLI…KSGKSPRRRA (95 aa)). Residues 240-251 (TKSRGRAAKKKM) are compositionally biased toward basic residues. Composition is skewed to polar residues over residues 291–302 (TRASSDASTLSG), 359–377 (KNNTQGSQEAQTALSSPLM), and 385–397 (SYTSPNMGPQPQV).

The protein localises to the cytoplasm. The protein resides in the nucleus. Its function is as follows. Transcription factor that regulates metabolic homeostasis in response to oxidative stress. Binds to the consensus sequence 5'-TT[G/A]TTTTG-3' and the related Daf-16 family binding element (DBE) with consensus sequence 5'-TT[G/A]TTTAC-3'. Main regulator of redox balance and osteoblast numbers and controls bone mass. Orchestrates the endocrine function of the skeleton in regulating glucose metabolism. May act as a positive regulator of apoptosis in cardiac smooth muscle cells as a result of its transcriptional activation of pro-apoptotic genes. This Danio rerio (Zebrafish) protein is Forkhead box protein O1-B (foxo1b).